We begin with the raw amino-acid sequence, 597 residues long: Glypican-3 (597 aa).

The N-terminal stretch at 1-24 (MAGTVRTACLLVAMLLGLGCLGQA) is a signal peptide. Residue Gln25 is modified to Pyrrolidone carboxylic acid. 7 disulfide bridges follow: Cys34–Cys71, Cys64–Cys261, Cys72–Cys264, Cys196–Cys348, Cys251–Cys284, Cys273–Cys421, and Cys277–Cys409. N-linked (GlcNAc...) asparagine glycosylation is found at Asn123 and Asn240. Residue Ser351 is modified to Phosphoserine. N-linked (GlcNAc...) asparagine glycosylation is present at Asn417. Residues Ser494 and Ser508 are each glycosylated (O-linked (Xyl...) (glycosaminoglycan) serine). The interval 533-553 (DAPGNKQHGNQKDNEITTSHS) is disordered.

This sequence belongs to the glypican family. As to quaternary structure, heterodimer; disulfide-linked. Cleavage by a furin-like convertase results in production of alpha and beta chains which form a disulfide-linked heterodimer. Interacts with DPP4. Interacts with FGF2. Interacts with WNT5A. Also interacts with WNT3A and WNT7B. Interacts with hedgehog protein SHH; the heparan sulfate chains are not required for the interaction. Also interacts with hedgehog protein IHH. Interacts with CD81. Interacts with Wnt receptors FZD4, FZD7 and FZD8; the heparan sulfate chains are required for the interaction. Post-translationally, O-glycosylated; contains heparan sulfate and/or chondroitin sulfate. In terms of processing, cleaved intracellularly by a furin-like convertase to generate 2 subunits, alpha and beta, which remain associated through disulfide bonds and are associated with the cell surface via the GPI-anchor. This processing is essential for its role in inhibition of hedgehog signaling. A second proteolytic event may result in cleavage of the protein on the cell surface, separating it from the GPI-anchor and leading to its shedding from the cell surface.

It localises to the cell membrane. Functionally, cell surface proteoglycan. Negatively regulates the hedgehog signaling pathway when attached via the GPI-anchor to the cell surface by competing with the hedgehog receptor PTC1 for binding to hedgehog proteins. Binding to the hedgehog protein SHH triggers internalization of the complex by endocytosis and its subsequent lysosomal degradation. Positively regulates the canonical Wnt signaling pathway by binding to the Wnt receptor Frizzled and stimulating the binding of the Frizzled receptor to Wnt ligands. Positively regulates the non-canonical Wnt signaling pathway. Binds to CD81 which decreases the availability of free CD81 for binding to the transcriptional repressor HHEX, resulting in nuclear translocation of HHEX and transcriptional repression. Inhibits the dipeptidyl peptidase activity of DPP4. Plays a role in limb patterning and skeletal development by controlling the cellular response to BMP4. Modulates the effects of growth factors BMP2, BMP7 and FGF7 on renal branching morphogenesis. Required for coronary vascular development. Plays a role in regulating cell movements during gastrulation. This Rattus norvegicus (Rat) protein is Glypican-3 (Gpc3).